A 907-amino-acid chain; its full sequence is Protein translocase subunit SecA (907 aa).

Residues Q87, 105-109 (GEGKT), and D510 each bind ATP. The Zn(2+) site is built by C892, C894, C903, and H904.

The protein belongs to the SecA family. As to quaternary structure, monomer and homodimer. Part of the essential Sec protein translocation apparatus which comprises SecA, SecYEG and auxiliary proteins SecDF-YajC and YidC. Zn(2+) is required as a cofactor.

The protein localises to the cell inner membrane. The protein resides in the cytoplasm. It carries out the reaction ATP + H2O + cellular proteinSide 1 = ADP + phosphate + cellular proteinSide 2.. Functionally, part of the Sec protein translocase complex. Interacts with the SecYEG preprotein conducting channel. Has a central role in coupling the hydrolysis of ATP to the transfer of proteins into and across the cell membrane, serving both as a receptor for the preprotein-SecB complex and as an ATP-driven molecular motor driving the stepwise translocation of polypeptide chains across the membrane. This is Protein translocase subunit SecA from Acinetobacter baumannii (strain ACICU).